The following is a 118-amino-acid chain: Small ribosomal subunit protein uS13 (118 aa).

The tract at residues 99–118 (GQRTRTNARTRKGPRKAIKK) is disordered.

It belongs to the universal ribosomal protein uS13 family. Part of the 30S ribosomal subunit. Forms a loose heterodimer with protein S19. Forms two bridges to the 50S subunit in the 70S ribosome.

Located at the top of the head of the 30S subunit, it contacts several helices of the 16S rRNA. In the 70S ribosome it contacts the 23S rRNA (bridge B1a) and protein L5 of the 50S subunit (bridge B1b), connecting the 2 subunits; these bridges are implicated in subunit movement. Contacts the tRNAs in the A and P-sites. In Xylella fastidiosa (strain M23), this protein is Small ribosomal subunit protein uS13.